Consider the following 117-residue polypeptide: Large ribosomal subunit protein bL17 (117 aa).

The protein belongs to the bacterial ribosomal protein bL17 family. As to quaternary structure, part of the 50S ribosomal subunit. Contacts protein L32.

The sequence is that of Large ribosomal subunit protein bL17 from Exiguobacterium sp. (strain ATCC BAA-1283 / AT1b).